The primary structure comprises 530 residues: Glucose-6-phosphate isomerase (530 aa).

Residue Glu347 is the Proton donor of the active site. Catalysis depends on residues His378 and Lys493.

The protein belongs to the GPI family.

It is found in the cytoplasm. It catalyses the reaction alpha-D-glucose 6-phosphate = beta-D-fructose 6-phosphate. It functions in the pathway carbohydrate biosynthesis; gluconeogenesis. Its pathway is carbohydrate degradation; glycolysis; D-glyceraldehyde 3-phosphate and glycerone phosphate from D-glucose: step 2/4. Its function is as follows. Catalyzes the reversible isomerization of glucose-6-phosphate to fructose-6-phosphate. The protein is Glucose-6-phosphate isomerase of Chlamydia abortus (strain DSM 27085 / S26/3) (Chlamydophila abortus).